The sequence spans 1070 residues: Carbamoyl phosphate synthase large chain (1070 aa).

Residues 1 to 401 (MPKRDDIKTI…ALLKAVRSLE (401 aa)) are carboxyphosphate synthetic domain. 12 residues coordinate ATP: arginine 129, arginine 169, glycine 175, glycine 176, lysine 208, isoleucine 210, glutamate 215, glycine 241, isoleucine 242, histidine 243, glutamine 284, and glutamate 298. The ATP-grasp 1 domain occupies 133-327 (RDLMNELGEP…IAKLAAKIAV (195 aa)). Positions 284, 298, and 300 each coordinate Mg(2+). The Mn(2+) site is built by glutamine 284, glutamate 298, and asparagine 300. The tract at residues 402–546 (IGADHLLLEE…YSTYEDENES (145 aa)) is oligomerization domain. Residues 547-929 (IRSSKESVIV…ALYKGFVASG (383 aa)) are carbamoyl phosphate synthetic domain. An ATP-grasp 2 domain is found at 671-861 (EKALEILQIP…MANVATRVIL (191 aa)). Arginine 707, arginine 746, valine 748, glutamate 752, glycine 777, valine 778, histidine 779, serine 780, glutamine 820, and glutamate 832 together coordinate ATP. The Mg(2+) site is built by glutamine 820, glutamate 832, and asparagine 834. Mn(2+) contacts are provided by glutamine 820, glutamate 832, and asparagine 834. An MGS-like domain is found at 930–1070 (TTMHDYGTVL…SEVKQPKARV (141 aa)). Positions 930–1070 (TTMHDYGTVL…SEVKQPKARV (141 aa)) are allosteric domain.

This sequence belongs to the CarB family. Composed of two chains; the small (or glutamine) chain promotes the hydrolysis of glutamine to ammonia, which is used by the large (or ammonia) chain to synthesize carbamoyl phosphate. Tetramer of heterodimers (alpha,beta)4. Requires Mg(2+) as cofactor. Mn(2+) serves as cofactor.

The catalysed reaction is hydrogencarbonate + L-glutamine + 2 ATP + H2O = carbamoyl phosphate + L-glutamate + 2 ADP + phosphate + 2 H(+). It catalyses the reaction hydrogencarbonate + NH4(+) + 2 ATP = carbamoyl phosphate + 2 ADP + phosphate + 2 H(+). The protein operates within amino-acid biosynthesis; L-arginine biosynthesis; carbamoyl phosphate from bicarbonate: step 1/1. Its pathway is pyrimidine metabolism; UMP biosynthesis via de novo pathway; (S)-dihydroorotate from bicarbonate: step 1/3. Large subunit of the glutamine-dependent carbamoyl phosphate synthetase (CPSase). CPSase catalyzes the formation of carbamoyl phosphate from the ammonia moiety of glutamine, carbonate, and phosphate donated by ATP, constituting the first step of 2 biosynthetic pathways, one leading to arginine and/or urea and the other to pyrimidine nucleotides. The large subunit (synthetase) binds the substrates ammonia (free or transferred from glutamine from the small subunit), hydrogencarbonate and ATP and carries out an ATP-coupled ligase reaction, activating hydrogencarbonate by forming carboxy phosphate which reacts with ammonia to form carbamoyl phosphate. The polypeptide is Carbamoyl phosphate synthase large chain (Listeria innocua serovar 6a (strain ATCC BAA-680 / CLIP 11262)).